The following is a 310-amino-acid chain: Phosphoribosylaminoimidazole-succinocarboxamide synthase (310 aa).

Belongs to the SAICAR synthetase family.

The catalysed reaction is 5-amino-1-(5-phospho-D-ribosyl)imidazole-4-carboxylate + L-aspartate + ATP = (2S)-2-[5-amino-1-(5-phospho-beta-D-ribosyl)imidazole-4-carboxamido]succinate + ADP + phosphate + 2 H(+). The protein operates within purine metabolism; IMP biosynthesis via de novo pathway; 5-amino-1-(5-phospho-D-ribosyl)imidazole-4-carboxamide from 5-amino-1-(5-phospho-D-ribosyl)imidazole-4-carboxylate: step 1/2. This chain is Phosphoribosylaminoimidazole-succinocarboxamide synthase, found in Xanthomonas oryzae pv. oryzae (strain MAFF 311018).